The chain runs to 1207 residues: Putative coatomer subunit alpha (1207 aa).

8 WD repeats span residues 9–50 (SRSS…DRFD), 51–90 (GHDGPVRGIAFHPTQPLFVSGGDDYKVNVWNYKSRKLLFS), 93–134 (GHMD…AILT), 135–174 (GHSHYVMCAAFHPSEDLIVSASLDQTVRVWDISGLRMKNA), 210–249 (GHDRGVNWCAFHPTLPLILSAGDDRLVKLWRMTASKAWEV), 254–293 (GHFNNVSCCLFHPHQELILSASEDKTIRVWDLNRRTAVQT), 296–336 (RDND…HALN), and 370–411 (SAWL…NSLP). A phosphoserine mark is found at Ser409 and Ser942.

In terms of assembly, oligomeric complex that consists of at least the alpha, beta, beta', gamma, delta, epsilon and zeta subunits.

It localises to the cytoplasm. It is found in the golgi apparatus membrane. In terms of biological role, the coatomer is a cytosolic protein complex that binds to dilysine motifs and reversibly associates with Golgi non-clathrin-coated vesicles, which further mediate biosynthetic protein transport from the ER, via the Golgi up to the trans Golgi network. Coatomer complex is required for budding from Golgi membranes, and is essential for the retrograde Golgi-to-ER transport of dilysine-tagged proteins. The polypeptide is Putative coatomer subunit alpha (Schizosaccharomyces pombe (strain 972 / ATCC 24843) (Fission yeast)).